The primary structure comprises 104 residues: uncharacterized protein (104 aa).

This is an uncharacterized protein from Saccharomyces cerevisiae (strain ATCC 204508 / S288c) (Baker's yeast).